A 215-amino-acid polypeptide reads, in one-letter code: Nascent polypeptide-associated complex subunit alpha (215 aa).

The segment at 1–81 (MPGEATETVP…SEKKARKAMS (81 aa)) is disordered. Positions 9–28 (VPATEQELPQPQAETGSGTE) are enriched in polar residues. The span at 29–40 (SDSDESVPELEG) shows a compositional bias: acidic residues. S43 carries the phosphoserine; by ILK1 modification. The segment covering 44–57 (TQATTQQAQLAAAA) has biased composition (low complexity). The segment at 69 to 80 (QSRSEKKARKAM) is required for DNA-binding. The NAC-A/B domain occupies 70-135 (SRSEKKARKA…AKIEDLSQQA (66 aa)). Residues 93–108 (RVTIRKSKNILFVITK) are RNA/DNA-binding. Position 132 is a phosphoserine (S132). K142 is modified (N6-acetyllysine; alternate). Residue K142 forms a Glycyl lysine isopeptide (Lys-Gly) (interchain with G-Cter in SUMO2); alternate linkage. At T159 the chain carries Phosphothreonine; by GSK3-beta. T161 is subject to Phosphothreonine. Phosphoserine is present on residues S166, S186, S191, and S203. The UBA domain maps to 176–213 (VEVKDIEWVMSQANVSRAKAVRALKNNSNNIVNAIMEL).

The protein belongs to the NAC-alpha family. As to quaternary structure, part of the nascent polypeptide-associated complex (NAC), which is a heterodimer of NACA and BTF3 (via NAC-A/B domains). NAC associates with ribosomes through the BTF3/NACB subunit and contacts the ribosomal protein L23, which is positioned near the exiting site. Both subunits can contact nascent polypeptide chains. NACA may also form homodimers, and only this form binds DNA. Interacts with TBP and JUN. Post-translationally, phosphorylation of Ser-43 by ILK during cell adhesion may promote nuclear localization. Phosphorylation of Thr-159 by GSK3B may promote proteasome mediated degradation.

The protein localises to the cytoplasm. Its subcellular location is the nucleus. Prevents inappropriate targeting of non-secretory polypeptides to the endoplasmic reticulum (ER). Binds to nascent polypeptide chains as they emerge from the ribosome and blocks their interaction with the signal recognition particle (SRP), which normally targets nascent secretory peptides to the ER. Also reduces the inherent affinity of ribosomes for protein translocation sites in the ER membrane (M sites). May act as a specific coactivator for JUN, binding to DNA and stabilizing the interaction of JUN homodimers with target gene promoters. This Chinchilla lanigera (Long-tailed chinchilla) protein is Nascent polypeptide-associated complex subunit alpha.